We begin with the raw amino-acid sequence, 212 residues long: ATP phosphoribosyltransferase (212 aa).

The protein belongs to the ATP phosphoribosyltransferase family. Short subfamily. In terms of assembly, heteromultimer composed of HisG and HisZ subunits.

The protein resides in the cytoplasm. It catalyses the reaction 1-(5-phospho-beta-D-ribosyl)-ATP + diphosphate = 5-phospho-alpha-D-ribose 1-diphosphate + ATP. The protein operates within amino-acid biosynthesis; L-histidine biosynthesis; L-histidine from 5-phospho-alpha-D-ribose 1-diphosphate: step 1/9. Its function is as follows. Catalyzes the condensation of ATP and 5-phosphoribose 1-diphosphate to form N'-(5'-phosphoribosyl)-ATP (PR-ATP). Has a crucial role in the pathway because the rate of histidine biosynthesis seems to be controlled primarily by regulation of HisG enzymatic activity. The sequence is that of ATP phosphoribosyltransferase from Citrifermentans bemidjiense (strain ATCC BAA-1014 / DSM 16622 / JCM 12645 / Bem) (Geobacter bemidjiensis).